An 871-amino-acid polypeptide reads, in one-letter code: Ubiquitin carboxyl-terminal hydrolase 8 (871 aa).

Positions 4 to 99 constitute a DUSP domain; the sequence is TSPDESPDST…GETGEASVSG (96 aa). The USP domain maps to 279–869; the sequence is TGLQNLGNTC…AAYVLFYKRL (591 aa). The active-site Nucleophile is the C288. Positions 615-650 are disordered; that stretch reads ENLENPTEEEATDKTDTDGTTSVEDTNSTDVKETTE. Residue H828 is the Proton acceptor of the active site.

This sequence belongs to the peptidase C19 family.

It catalyses the reaction Thiol-dependent hydrolysis of ester, thioester, amide, peptide and isopeptide bonds formed by the C-terminal Gly of ubiquitin (a 76-residue protein attached to proteins as an intracellular targeting signal).. Functionally, recognizes and hydrolyzes the peptide bond at the C-terminal Gly of ubiquitin. Involved in the processing of poly-ubiquitin precursors as well as that of ubiquitinated proteins. In Arabidopsis thaliana (Mouse-ear cress), this protein is Ubiquitin carboxyl-terminal hydrolase 8 (UBP8).